The sequence spans 203 residues: WUSCHEL-related homeobox 3 (203 aa).

Residues 4 to 68 constitute a DNA-binding region (homeobox; WUS-type); sequence TPSTRWCPTP…NHKARERQRL (65 aa). Disordered stretches follow at residues 73–95, 109–135, and 180–203; these read CARH…TAAA, LHHH…QQQQ, and STSG…TSTN. A compositionally biased stretch (pro residues) spans 80 to 91; sequence PSPPSSTVPPAP. Positions 109-118 are enriched in basic residues; sequence LHHHHHHHHP. Composition is skewed to low complexity over residues 119–135 and 190–203; these read YAAA…QQQQ and CSSS…TSTN.

It belongs to the WUS homeobox family.

It localises to the nucleus. Its function is as follows. Transcription factor which may be involved in developmental processes. This chain is WUSCHEL-related homeobox 3 (WOX3), found in Oryza sativa subsp. indica (Rice).